The primary structure comprises 290 residues: tRNA (adenine(58)-N(1))-methyltransferase catalytic subunit TRMT61A (290 aa).

S2 is modified (N-acetylserine). 5 substrate regions span residues 20 to 22 (LGH), 35 to 42 (QTQTRHGV), 64 to 65 (GW), 85 to 89 (QILYS), and 110 to 117 (SGTGSGSV). S-adenosyl-L-methionine is bound by residues L87, 114 to 116 (SGS), E135, R140, 163 to 164 (DV), and D181. Substrate regions lie at residues 180 to 183 (LDIP) and 205 to 212 (SFSPCIEQ). T279 is a binding site for substrate.

This sequence belongs to the class I-like SAM-binding methyltransferase superfamily. TRM61 family. Heterotetramer; composed of two copies of TRMT6 and two copies of TRMT61A.

It localises to the nucleus. It carries out the reaction adenosine(58) in tRNA + S-adenosyl-L-methionine = N(1)-methyladenosine(58) in tRNA + S-adenosyl-L-homocysteine + H(+). It catalyses the reaction an adenosine in mRNA + S-adenosyl-L-methionine = an N(1)-methyladenosine in mRNA + S-adenosyl-L-homocysteine + H(+). Its function is as follows. Catalytic subunit of tRNA (adenine-N(1)-)-methyltransferase, which catalyzes the formation of N(1)-methyladenine at position 58 (m1A58) in initiator methionyl-tRNA. Catalytic subunit of mRNA N(1)-methyltransferase complex, which mediates methylation of adenosine residues at the N(1) position of a small subset of mRNAs: N(1) methylation takes place in tRNA T-loop-like structures of mRNAs and is only present at low stoichiometries. The sequence is that of tRNA (adenine(58)-N(1))-methyltransferase catalytic subunit TRMT61A (Trmt61a) from Rattus norvegicus (Rat).